A 580-amino-acid polypeptide reads, in one-letter code: Mucolipin-1 (580 aa).

A disordered region spans residues 1–38 (MTAPAGPRGSETERLLTPNPGYGTQAGPSPAPPTPPEE). Topologically, residues 1-65 (MTAPAGPRGS…FRAKGRKPCK (65 aa)) are cytoplasmic. Serine 10 bears the Phosphoserine mark. The short motif at 11-16 (ETERLL) is the Dileucine motif; mediates targeting to lysosomes element. Residues 42–62 (RRRLKYFFMSPCDKFRAKGRK) form an interaction with phosphoinositides region. Residues 66–86 (LMLQVVKILVVTVQLILFGLS) form a helical membrane-spanning segment. Topologically, residues 87–298 (NQLAVTFREE…VFQHGDNSFR (212 aa)) are extracellular. Residues 107-121 (LGYSDGADDTFAAYT) form an extracellular/lumenal pore loop region. Cysteine 166 and cysteine 192 are oxidised to a cystine. The N-linked (GlcNAc...) asparagine glycan is linked to asparagine 230. Cysteine 253 and cysteine 284 form a disulfide bridge. Residues 299 to 321 (LLFDVVVILTCSLSFLLCARSLL) form a helical membrane-spanning segment. The Cytoplasmic portion of the chain corresponds to 322–350 (RGFLLQNEFVGFMWRQRGRVISLWERLEF). The chain crosses the membrane as a helical span at residues 351 to 371 (VNGWYILLVTSDVLTISGTIM). Topologically, residues 372–382 (KIGIEAKNLAS) are extracellular. A helical membrane pass occupies residues 383–405 (YDVCSILLGTSTLLVWVGVIRYL). The Cytoplasmic portion of the chain corresponds to 406 to 427 (TFFHNYNILIATLRVALPSVMR). A helical membrane pass occupies residues 428–448 (FCCCVAVIYLGYCFCGWIVLG). The Extracellular segment spans residues 449-456 (PYHVKFRS). Residues 457 to 477 (LSMVSECLFSLINGDDMFVTF) constitute an intramembrane region (pore-forming). The Selectivity filter motif lies at 469-474 (NGDDMF). The Extracellular segment spans residues 478 to 491 (AAMQAQQGRSSLVW). Residues 492 to 513 (LFSQLYLYSFISLFIYMVLSLF) form a helical membrane-spanning segment. Over 514–580 (IALITGAYDT…PSEEHSLLVN (67 aa)) the chain is Cytoplasmic. Residues serine 557 and serine 559 each carry the phosphoserine; by PAK modification. The segment at 565–567 (CCC) is required for palmitoylation and association with membranes. Residues 573–578 (EEHSLL) carry the Dileucine internalization motif; mediates AP2 complex-dependent internalization motif.

It belongs to the transient receptor (TC 1.A.4) family. Polycystin subfamily. MCOLN1 sub-subfamily. In terms of assembly, homotetramer. Homooligomer. Can heterooligomerize with MCOLN2 or MCOLN3; heteromeric assemblies have different channel properties as compared to the respective homooligomers and may be tissue-specific. Interacts with PDCD6. Interacts with TMEM163. Interacts with LAPTM4B. Palmitoylated; involved in association with membranes. In terms of processing, phosphorylation by PKA inhibits channel activity. Dephosphorylation increases activity. Post-translationally, proteolytically cleaved probably involving multiple lysosomal proteases including cathepsin B; inhibits lysosomal channel activity. In terms of tissue distribution, widely expressed in adult and fetal tissues.

Its subcellular location is the late endosome membrane. It localises to the lysosome membrane. It is found in the cytoplasmic vesicle membrane. The protein resides in the cell projection. The protein localises to the phagocytic cup. Its subcellular location is the cytoplasmic vesicle. It localises to the phagosome membrane. It is found in the cell membrane. The enzyme catalyses Ca(2+)(in) = Ca(2+)(out). It catalyses the reaction Fe(2+)(in) = Fe(2+)(out). The catalysed reaction is Mg(2+)(in) = Mg(2+)(out). It carries out the reaction K(+)(in) = K(+)(out). The enzyme catalyses Na(+)(in) = Na(+)(out). Its activity is regulated as follows. Channel activity is controlled by multiple regulatory mechanisms in different subcellular compartments. Channel function is transiently modulated by changes in Ca(2+) in a pH-dependent manner; pH changes modify the aggregation state of unitary channels; a negative cooperativity between extracellular/lumenal Ca(2+) and H(+) is suggested. Regulated by phosphoinositides in a compartment-specific manner: in lysosomes activated by PtdIns(3,5)P2 (Phosphatidylinositol 3,5-bisphosphate) and at the plasma membrane inhibited by PtdIns(4,5)P2 (Phosphatidylinositol 4,5-bisphosphate). Nonselective cation channel probably playing a role in the regulation of membrane trafficking events and of metal homeostasis. Acts as a Ca(2+)-permeable cation channel with inwardly rectifying activity. Proposed to play a major role in Ca(2+) release from late endosome and lysosome vesicles to the cytoplasm, which is important for many lysosome-dependent cellular events, including the fusion and trafficking of these organelles, exocytosis and autophagy. Required for efficient uptake of large particles in macrophages in which Ca(2+) release from the lysosomes triggers lysosomal exocytosis. May also play a role in phagosome-lysosome fusion. Involved in lactosylceramide trafficking indicative for a role in the regulation of late endocytic membrane fusion/fission events. By mediating lysosomal Ca(2+) release is involved in regulation of mTORC1 signaling and in mTOR/TFEB-dependent lysosomal adaptation to environmental cues such as nutrient levels. Seems to act as lysosomal active oxygen species (ROS) sensor involved in ROS-induced TFEB activation and autophagy. Also functions as a Fe(2+) permeable channel in late endosomes and lysosomes. Also permeable to Mg(2+), Na(+). K(+) and Cs(+). Proposed to play a role in zinc homeostasis probably implicating its association with TMEM163 In adaptive immunity, TRPML2 and TRPML1 may play redundant roles in the function of the specialized lysosomes of B cells. In terms of biological role, may contribute to cellular lipase activity within the late endosomal pathway or at the cell surface which may be involved in processes of membrane reshaping and vesiculation, especially the growth of tubular structures. However, it is not known, whether it conveys the enzymatic activity directly, or merely facilitates the activity of an associated phospholipase. The sequence is that of Mucolipin-1 from Homo sapiens (Human).